A 279-amino-acid polypeptide reads, in one-letter code: Armadillo repeat-containing protein 1 (279 aa).

An ARM repeat occupies 36–78 (GCLPGLILFLDHPSPPVVHSALLALRYLAECRANREKMKGELG). The interval 236–257 (EYLPEDESPSKEQDKAVSRVGS) is disordered. Over residues 243–252 (SPSKEQDKAV) the composition is skewed to basic and acidic residues.

As to quaternary structure, interacts with mitochondrial contact site and cristae organizing system (MICOS) complex components IMMT/MIC60 and MICOS10/MIC10. Interacts with mitochondrial outer membrane sorting assembly machinery (SAM) complex components SAMM50 and MTX1.

The protein resides in the cytoplasm. The protein localises to the mitochondrion. Its subcellular location is the mitochondrion outer membrane. In association with mitochondrial contact site and cristae organizing system (MICOS) complex components and mitochondrial outer membrane sorting assembly machinery (SAM) complex components may regulate mitochondrial dynamics playing a role in determining mitochondrial length, distribution and motility. In Gallus gallus (Chicken), this protein is Armadillo repeat-containing protein 1 (ARMC1).